A 176-amino-acid chain; its full sequence is Magnesium-dependent phosphatase 1 (176 aa).

Asp11 serves as the catalytic Nucleophile. Asp11 provides a ligand contact to Mg(2+). Residues Leu12 and Asp13 each contribute to the phosphate site. A Mg(2+)-binding site is contributed by Asp13. The active-site Proton donor is the Asp13. Trp20 contacts substrate. The phosphate site is built by Ser69, Arg70, and Lys100. A substrate-binding site is contributed by Arg70. Residue Asp123 coordinates Mg(2+).

It belongs to the HAD-like hydrolase superfamily. It depends on Mg(2+) as a cofactor.

It catalyses the reaction O-phospho-L-tyrosyl-[protein] + H2O = L-tyrosyl-[protein] + phosphate. With respect to regulation, inhibited by vanadate and zinc, and slightly by calcium. In terms of biological role, magnesium-dependent phosphatase which may act as a tyrosine phosphatase. This Homo sapiens (Human) protein is Magnesium-dependent phosphatase 1 (MDP1).